A 118-amino-acid chain; its full sequence is Ribosome-binding factor A (118 aa).

The protein belongs to the RbfA family. As to quaternary structure, monomer. Binds 30S ribosomal subunits, but not 50S ribosomal subunits or 70S ribosomes.

It localises to the cytoplasm. In terms of biological role, one of several proteins that assist in the late maturation steps of the functional core of the 30S ribosomal subunit. Associates with free 30S ribosomal subunits (but not with 30S subunits that are part of 70S ribosomes or polysomes). Required for efficient processing of 16S rRNA. May interact with the 5'-terminal helix region of 16S rRNA. The protein is Ribosome-binding factor A of Geobacter sulfurreducens (strain ATCC 51573 / DSM 12127 / PCA).